A 102-amino-acid polypeptide reads, in one-letter code: Large ribosomal subunit protein bL21 (102 aa).

This sequence belongs to the bacterial ribosomal protein bL21 family. In terms of assembly, part of the 50S ribosomal subunit. Contacts protein L20.

This protein binds to 23S rRNA in the presence of protein L20. The protein is Large ribosomal subunit protein bL21 of Geotalea daltonii (strain DSM 22248 / JCM 15807 / FRC-32) (Geobacter daltonii).